Consider the following 104-residue polypeptide: Protein E7 (104 aa).

Positions 1 to 47 are E7 terminal domain; it reads MHGDTINIQDVILDLVPQPEIDLQCYEQLDYEQFDSSEEDETDNVRN. The LXCXE motif; interaction with host RB1 and TMEM173/STING signature appears at 23-27; that stretch reads LQCYE. Residues 65–101 fold into a zinc finger; the sequence is CCVCNSIVQLAVLSSRQNVRAVEQLLMGDVSLVCHQC. Positions 83 to 91 match the Nuclear export signal motif; it reads VRAVEQLLM.

This sequence belongs to the papillomaviridae E7 protein family. Homodimer. Homooligomer. Interacts with host RB1; this interaction induces dissociation of RB1-E2F1 complex thereby disrupting RB1 activity. Interacts with host EP300; this interaction represses EP300 transcriptional activity. Interacts with protein E2; this interaction inhibits E7 oncogenic activity. Interacts with host TMEM173/STING; this interaction impairs the ability of TMEM173/STING to sense cytosolic DNA and promote the production of type I interferon (IFN-alpha and IFN-beta). Highly phosphorylated.

The protein resides in the host cytoplasm. It is found in the host nucleus. Its function is as follows. Plays a role in viral genome replication by driving entry of quiescent cells into the cell cycle. Stimulation of progression from G1 to S phase allows the virus to efficiently use the cellular DNA replicating machinery to achieve viral genome replication. E7 protein has both transforming and trans-activating activities. Induces the disassembly of the E2F1 transcription factor from RB1, with subsequent transcriptional activation of E2F1-regulated S-phase genes. Interferes with host histone deacetylation mediated by HDAC1 and HDAC2, leading to transcription activation. Also plays a role in the inhibition of both antiviral and antiproliferative functions of host interferon alpha. Interaction with host TMEM173/STING impairs the ability of TMEM173/STING to sense cytosolic DNA and promote the production of type I interferon (IFN-alpha and IFN-beta). The chain is Protein E7 from Homo sapiens (Human).